Reading from the N-terminus, the 463-residue chain is DNA polymerase subunit gamma-2, mitochondrial (463 aa).

A mitochondrion-targeting transit peptide spans 1-44; sequence MLLTLKNTGQLLVAACSKVARSLAKYHPRVNHHRHCVWCSKRGL.

In terms of assembly, heterotrimer composed of a catalytic subunit and a homodimer of accessory subunits.

The protein localises to the mitochondrion. In terms of biological role, mitochondrial polymerase processivity subunit. It regulates the polymerase and exonuclease activities promoting processive DNA synthesis. Binds to ss-DNA. This is DNA polymerase subunit gamma-2, mitochondrial (polg2) from Xenopus laevis (African clawed frog).